Here is a 156-residue protein sequence, read N- to C-terminus: Arginine repressor (156 aa).

This sequence belongs to the ArgR family.

Its subcellular location is the cytoplasm. The protein operates within amino-acid biosynthesis; L-arginine biosynthesis [regulation]. Functionally, regulates arginine biosynthesis genes. The polypeptide is Arginine repressor (Shewanella baltica (strain OS223)).